The primary structure comprises 827 residues: Periplasmic nitrate reductase (827 aa).

Positions 1 to 32 (MTLSRRAFIKQTAAATAASAAGVVLPGVDALA) form a signal peptide, tat-type signal. Positions 37 to 93 (LTWSKAPCRFCGTGCGVSVGVKNGKVVATQGDPQAEVNRGLNCVKGYFLSKIMYGQD) constitute a 4Fe-4S Mo/W bis-MGD-type domain. [4Fe-4S] cluster-binding residues include Cys-44, Cys-47, Cys-51, and Cys-79. Residues Lys-81, Gln-148, Asn-173, Cys-177, 241 to 245 (STFEH), 260 to 262 (QSD), Met-371, Gln-375, Asn-481, 507 to 508 (SD), Lys-530, Asp-557, and 717 to 726 (TGRVLEHWHS) each bind Mo-bis(molybdopterin guanine dinucleotide). Trp-793 lines the substrate pocket. 2 residues coordinate Mo-bis(molybdopterin guanine dinucleotide): Asn-801 and Lys-818.

The protein belongs to the prokaryotic molybdopterin-containing oxidoreductase family. NasA/NapA/NarB subfamily. As to quaternary structure, component of the periplasmic nitrate reductase NapAB complex composed of NapA and NapB. [4Fe-4S] cluster serves as cofactor. It depends on Mo-bis(molybdopterin guanine dinucleotide) as a cofactor. Predicted to be exported by the Tat system. The position of the signal peptide cleavage has not been experimentally proven.

It localises to the periplasm. The enzyme catalyses 2 Fe(II)-[cytochrome] + nitrate + 2 H(+) = 2 Fe(III)-[cytochrome] + nitrite + H2O. Catalytic subunit of the periplasmic nitrate reductase complex NapAB. Receives electrons from NapB and catalyzes the reduction of nitrate to nitrite. This Paraburkholderia xenovorans (strain LB400) protein is Periplasmic nitrate reductase.